We begin with the raw amino-acid sequence, 557 residues long: Urocanate hydratase (557 aa).

The tract at residues Met-1 to Asn-20 is disordered. Residues Gly-52 to Gly-53, Gln-130, Gly-176 to Gly-178, Glu-196, Arg-201, Asn-242 to Ala-243, Gln-263 to His-267, Tyr-273 to Leu-274, and Tyr-322 each bind NAD(+). Cys-410 is an active-site residue. NAD(+) is bound at residue Gly-492.

The protein belongs to the urocanase family. Requires NAD(+) as cofactor.

The protein resides in the cytoplasm. It catalyses the reaction 4-imidazolone-5-propanoate = trans-urocanate + H2O. The protein operates within amino-acid degradation; L-histidine degradation into L-glutamate; N-formimidoyl-L-glutamate from L-histidine: step 2/3. Its function is as follows. Catalyzes the conversion of urocanate to 4-imidazolone-5-propionate. The protein is Urocanate hydratase of Brucella anthropi (strain ATCC 49188 / DSM 6882 / CCUG 24695 / JCM 21032 / LMG 3331 / NBRC 15819 / NCTC 12168 / Alc 37) (Ochrobactrum anthropi).